Here is a 425-residue protein sequence, read N- to C-terminus: Histidine--tRNA ligase (425 aa).

The protein belongs to the class-II aminoacyl-tRNA synthetase family. Homodimer.

It is found in the cytoplasm. The enzyme catalyses tRNA(His) + L-histidine + ATP = L-histidyl-tRNA(His) + AMP + diphosphate + H(+). This is Histidine--tRNA ligase from Pelotomaculum thermopropionicum (strain DSM 13744 / JCM 10971 / SI).